Consider the following 163-residue polypeptide: MSQSKVEEPLAKEVLANIDIAEILNRIPHRYPFLLVDRAEDYRPHQSIVGIKCVTINEPFFQGHFPGNPVMPGVLIIEALAQTGAVLMSKSLEVETEGKTIFFMSVDNARFRTPVRPGDVIRMEVEVTRARSSIFKFKGVAKVGDKVAAEAEFAAMVVETPKL.

Residue H64 is part of the active site.

It belongs to the thioester dehydratase family. FabZ subfamily.

Its subcellular location is the cytoplasm. It carries out the reaction a (3R)-hydroxyacyl-[ACP] = a (2E)-enoyl-[ACP] + H2O. Its function is as follows. Involved in unsaturated fatty acids biosynthesis. Catalyzes the dehydration of short chain beta-hydroxyacyl-ACPs and long chain saturated and unsaturated beta-hydroxyacyl-ACPs. In Caulobacter sp. (strain K31), this protein is 3-hydroxyacyl-[acyl-carrier-protein] dehydratase FabZ.